The primary structure comprises 465 residues: Siroheme synthase (465 aa).

Residues 1–203 are precorrin-2 dehydrogenase /sirohydrochlorin ferrochelatase; it reads MDFLPLFHSL…GRPAEAERLL (203 aa). NAD(+) is bound by residues 22-23 and 43-44; these read EV and PQ. Phosphoserine is present on Ser128. The interval 217 to 465 is uroporphyrinogen-III C-methyltransferase; that stretch reads GEVYLVGAGP…AWFEGAREDA (249 aa). Pro226 is a binding site for S-adenosyl-L-methionine. Asp249 serves as the catalytic Proton acceptor. Lys271 (proton donor) is an active-site residue. S-adenosyl-L-methionine is bound by residues 302–304, Ile307, 332–333, Met384, and Gly413; these read GGD and TA.

In the N-terminal section; belongs to the precorrin-2 dehydrogenase / sirohydrochlorin ferrochelatase family. The protein in the C-terminal section; belongs to the precorrin methyltransferase family.

The catalysed reaction is uroporphyrinogen III + 2 S-adenosyl-L-methionine = precorrin-2 + 2 S-adenosyl-L-homocysteine + H(+). The enzyme catalyses precorrin-2 + NAD(+) = sirohydrochlorin + NADH + 2 H(+). It catalyses the reaction siroheme + 2 H(+) = sirohydrochlorin + Fe(2+). Its pathway is cofactor biosynthesis; adenosylcobalamin biosynthesis; precorrin-2 from uroporphyrinogen III: step 1/1. The protein operates within cofactor biosynthesis; adenosylcobalamin biosynthesis; sirohydrochlorin from precorrin-2: step 1/1. It participates in porphyrin-containing compound metabolism; siroheme biosynthesis; precorrin-2 from uroporphyrinogen III: step 1/1. It functions in the pathway porphyrin-containing compound metabolism; siroheme biosynthesis; siroheme from sirohydrochlorin: step 1/1. Its pathway is porphyrin-containing compound metabolism; siroheme biosynthesis; sirohydrochlorin from precorrin-2: step 1/1. Functionally, multifunctional enzyme that catalyzes the SAM-dependent methylations of uroporphyrinogen III at position C-2 and C-7 to form precorrin-2 via precorrin-1. Then it catalyzes the NAD-dependent ring dehydrogenation of precorrin-2 to yield sirohydrochlorin. Finally, it catalyzes the ferrochelation of sirohydrochlorin to yield siroheme. The polypeptide is Siroheme synthase (Pseudomonas aeruginosa (strain ATCC 15692 / DSM 22644 / CIP 104116 / JCM 14847 / LMG 12228 / 1C / PRS 101 / PAO1)).